A 468-amino-acid polypeptide reads, in one-letter code: Siroheme synthase 3 (468 aa).

Positions 1–204 are precorrin-2 dehydrogenase /sirohydrochlorin ferrochelatase; the sequence is MDYLPIFCRL…GDSASANQLA (204 aa). Residues 22–23 and 43–44 contribute to the NAD(+) site; these read EV and PE. The residue at position 128 (Ser-128) is a Phosphoserine. Positions 216 to 468 are uroporphyrinogen-III C-methyltransferase; that stretch reads GEVVLVGAGP…GAADAALASA (253 aa). Pro-225 provides a ligand contact to S-adenosyl-L-methionine. Residue Asp-248 is the Proton acceptor of the active site. Lys-270 functions as the Proton donor in the catalytic mechanism. Residues 301–303, Ile-306, 331–332, Met-383, and Gly-412 contribute to the S-adenosyl-L-methionine site; these read GGD and TA.

The protein in the N-terminal section; belongs to the precorrin-2 dehydrogenase / sirohydrochlorin ferrochelatase family. This sequence in the C-terminal section; belongs to the precorrin methyltransferase family.

The catalysed reaction is uroporphyrinogen III + 2 S-adenosyl-L-methionine = precorrin-2 + 2 S-adenosyl-L-homocysteine + H(+). The enzyme catalyses precorrin-2 + NAD(+) = sirohydrochlorin + NADH + 2 H(+). It catalyses the reaction siroheme + 2 H(+) = sirohydrochlorin + Fe(2+). It participates in cofactor biosynthesis; adenosylcobalamin biosynthesis; precorrin-2 from uroporphyrinogen III: step 1/1. Its pathway is cofactor biosynthesis; adenosylcobalamin biosynthesis; sirohydrochlorin from precorrin-2: step 1/1. The protein operates within porphyrin-containing compound metabolism; siroheme biosynthesis; precorrin-2 from uroporphyrinogen III: step 1/1. It functions in the pathway porphyrin-containing compound metabolism; siroheme biosynthesis; siroheme from sirohydrochlorin: step 1/1. It participates in porphyrin-containing compound metabolism; siroheme biosynthesis; sirohydrochlorin from precorrin-2: step 1/1. Functionally, multifunctional enzyme that catalyzes the SAM-dependent methylations of uroporphyrinogen III at position C-2 and C-7 to form precorrin-2 via precorrin-1. Then it catalyzes the NAD-dependent ring dehydrogenation of precorrin-2 to yield sirohydrochlorin. Finally, it catalyzes the ferrochelation of sirohydrochlorin to yield siroheme. The chain is Siroheme synthase 3 from Aeromonas hydrophila subsp. hydrophila (strain ATCC 7966 / DSM 30187 / BCRC 13018 / CCUG 14551 / JCM 1027 / KCTC 2358 / NCIMB 9240 / NCTC 8049).